We begin with the raw amino-acid sequence, 107 residues long: Translation initiation factor IF-1, chloroplastic (107 aa).

One can recognise an S1-like domain in the interval 8–83; sequence REKKNPREAK…SKGRIIYRLP (76 aa).

It belongs to the IF-1 family. As to quaternary structure, component of the 30S ribosomal translation pre-initiation complex which assembles on the 30S ribosome in the order IF-2 and IF-3, IF-1 and N-formylmethionyl-tRNA(fMet); mRNA recruitment can occur at any time during PIC assembly.

It is found in the plastid. The protein localises to the chloroplast. Its function is as follows. One of the essential components for the initiation of protein synthesis. Stabilizes the binding of IF-2 and IF-3 on the 30S subunit to which N-formylmethionyl-tRNA(fMet) subsequently binds. Helps modulate mRNA selection, yielding the 30S pre-initiation complex (PIC). Upon addition of the 50S ribosomal subunit IF-1, IF-2 and IF-3 are released leaving the mature 70S translation initiation complex. The protein is Translation initiation factor IF-1, chloroplastic of Lolium perenne (Perennial ryegrass).